A 203-amino-acid polypeptide reads, in one-letter code: Pacifastin-like protease inhibitor cvp4 (203 aa).

The first 19 residues, 1–19, serve as a signal peptide directing secretion; it reads MGFLACALLVVATAHAATA. Pacifastin domains are found at residues 23-59, 85-121, and 147-184; these read PETCEIGSNFKNYCNNCYCFDGVMDHALCTRESCDRN, DEPCTPGENFKYYCNDCQCLDGLRAHAMCTRMRCDRN, and DESCAPGASFKYYCNSCTCGAEGKVAEAQCTSQECDRY. 6 disulfide bridges follow: C26–C41, C36–C56, C39–C51, C88–C103, C98–C118, and C101–C113. Residues 129-148 show a composition bias toward basic and acidic residues; it reads RKYPEPEKWNSEKERKKSDE. The interval 129 to 150 is disordered; the sequence is RKYPEPEKWNSEKERKKSDESC. 3 disulfides stabilise this stretch: C150–C165, C160–C181, and C163–C176.

The protein belongs to the protease inhibitor I19 family. As to expression, expressed by the venom gland.

It localises to the secreted. Inhibits trypsin activity and prophenoloxidase (PPO) activation, an enzyme essential for both clotting and insect innate immune responses. It does not inhibit activity of chymotrypsin and protease K, and has no effect on phenoloxidase (PO) activity. In Pimpla hypochondriaca (Parasitoid wasp), this protein is Pacifastin-like protease inhibitor cvp4.